Here is a 278-residue protein sequence, read N- to C-terminus: Methyltransferase adrK (278 aa).

Residues 124-125, 151-152, and 152-153 contribute to the S-adenosyl-L-methionine site; these read DL, DV, and VL.

The protein belongs to the class I-like SAM-binding methyltransferase superfamily. In terms of assembly, homodimer.

Its pathway is secondary metabolite biosynthesis; terpenoid biosynthesis. Methyltransferase; part of the gene cluster that mediates the biosynthesis of andrastins, meroterpenoid compounds that exhibit inhibitory activity against ras farnesyltransferase, suggesting that they could be promising leads for antitumor agents. The first step of the pathway is the synthesis of 3,5-dimethylorsellinic acid (DMOA) by the polyketide synthase adrD via condensation of one acetyl-CoA starter unit with 3 malonyl-CoA units and 2 methylations. DMAO is then converted to farnesyl-DMAO by the prenyltransferase adrG. The methyltransferase adrK catalyzes the methylation of the carboxyl group of farnesyl-DMAO to farnesyl-DMAO methyl ester which is further converted to epoxyfarnesyl-DMAO methyl ester by the FAD-dependent monooxygenase adrH. The terpene cyclase adrI then catalyzes the carbon skeletal rearrangement to generate the andrastin E, the first compound in the pathway having the andrastin scaffold, with the tetracyclic ring system. The post-cyclization tailoring enzymes adrF, adrE, adrJ, and adrA, are involved in the conversion of andrastin E into andrastin A. The short chain dehydrogenase adrF is responsible for the oxidation of the C-3 a hydroxyl group of andrastin E to yield the corresponding ketone, andrastin D. The ketoreductase adrE stereoselectively reduces the carbonyl moiety to reverse the stereochemistry of the C-3 position to yield andrastin F. The acetyltransferase adrJ is the acetyltransferase that attaches the acetyl group to the C-3 hydroxyl group of andrastin F to yield andrastin C. Finally, the cytochrome P450 monooxygenase adrA catalyzes two sequential oxidation reactions of the C-23 methyl group, to generate the corresponding alcohol andrastin B, and aldehyde andrastin A. In Penicillium roqueforti, this protein is Methyltransferase adrK.